The primary structure comprises 281 residues: Transcription factor HES-1 (281 aa).

The tract at residues methionine 1 to lysine 44 is disordered. Low complexity predominate over residues serine 10–valine 21. Over residues aspartate 26–arginine 35 the composition is skewed to basic and acidic residues. A bHLH domain is found at histidine 34–leucine 91. The Orange domain occupies tyrosine 110 to leucine 143. 2 disordered regions span residues glutamine 158–leucine 206 and threonine 255–asparagine 281. 2 stretches are compositionally biased toward pro residues: residues glutamine 164–proline 174 and phenylalanine 182–serine 201. Residues threonine 255–alanine 272 are compositionally biased toward polar residues. The WRPW motif signature appears at tryptophan 276–tryptophan 279.

In terms of assembly, interacts with SIRT1. Interacts weakly with TLE2. Interacts with HES6. Transcription repression requires formation of a complex with a corepressor protein of the Groucho/TLE family. Interacts (via WPRW motif) with TLE1. Interacts with an FA complex, composed of FANCA, FANCF, FANCG and FANCL, but not of FANCC, nor FANCE. Present in all tissues examined but highest in epithelial cells and in mesoderm-derived tissues such as embryonal muscle cells.

The protein localises to the nucleus. Transcriptional repressor of genes that require a bHLH protein for their transcription. May act as a negative regulator of myogenesis by inhibiting the functions of MYOD1 and ASH1. Binds DNA on N-box motifs: 5'-CACNAG-3' with high affinity and on E-box motifs: 5'-CANNTG-3' with low affinity. May play a role in a functional FA core complex response to DNA cross-link damage, being required for the stability and nuclear localization of FA core complex proteins, as well as for FANCD2 monoubiquitination in response to DNA damage. In Rattus norvegicus (Rat), this protein is Transcription factor HES-1 (Hes1).